Here is a 146-residue protein sequence, read N- to C-terminus: Hemoglobin subunit beta-2 (146 aa).

The 145-residue stretch at 2-146 folds into the Globin domain; it reads HWTAEEKQLI…VAHALARRYH (145 aa). Heme b-binding residues include His-63 and His-92.

Belongs to the globin family. Heterotetramer of two alpha chains and two beta chains. As to expression, red blood cells.

Involved in oxygen transport from the lung to the various peripheral tissues. This Iguana iguana (Common iguana) protein is Hemoglobin subunit beta-2.